The chain runs to 420 residues: Corticotropin-releasing factor receptor 1 (420 aa).

Positions 1-28 (MVPGPRPALLLLLFLLQAFLLWDSPVAA) are cleaved as a signal peptide. The Extracellular portion of the chain corresponds to 29–116 (SIQEQYCESL…CQEILSEEKR (88 aa)). 3 disulfide bridges follow: Cys35-Cys59, Cys49-Cys92, and Cys73-Cys107. Residues Asn43, Asn50, Asn83, Asn95, and Asn103 are each glycosylated (N-linked (GlcNAc...) asparagine). Residues 117–147 (SKLHYHIAVIINYLGHCVSLGTLLVAFVLFM) form a helical membrane-spanning segment. Residues 148–154 (RLRSIRC) lie on the Cytoplasmic side of the membrane. A helical transmembrane segment spans residues 155-179 (LRNIIHWNLITAFILRNATWFVVQL). Residues 180-194 (TMNPEVHESNVVWCR) are Extracellular-facing. Residues Cys193 and Cys263 are joined by a disulfide bond. The helical transmembrane segment at 195 to 223 (LVTAAYNYFHVTNFFWMFGEGCYLHTAIV) threads the bilayer. The Cytoplasmic portion of the chain corresponds to 224–230 (LTYSTDK). A helical membrane pass occupies residues 231-258 (LRKWMFICIGWCIPFPIIVAWAIGKLYY). The Extracellular segment spans residues 259 to 274 (DNEKCWFGKRAGVYTD). A helical transmembrane segment spans residues 275-300 (YIYQGPMILVLLINFIFLFNIVRILM). The Cytoplasmic portion of the chain corresponds to 301–311 (TKLRASTTSET). A helical transmembrane segment spans residues 312-336 (IQYRKAVKATLVLLSLLGITYMLFF). Over 337 to 343 (VNPGEDE) the chain is Extracellular. The chain crosses the membrane as a helical span at residues 344 to 373 (ISRIVFIYFNSFLESFQGFFVSVFYCFLNS). Residues 374-420 (EVRSAVRKRWHRWQDKHSIRARVARAMSIPTSPTRVSFHSIKQSSAV) are Cytoplasmic-facing.

It belongs to the G-protein coupled receptor 2 family. Interacts (via N-terminal extracellular domain) with CRF and UCN.

It localises to the cell membrane. Functionally, G-protein coupled receptor for CRH (corticotropin-releasing factor) and UCN (urocortin). Has high affinity for CRH and UCN. Ligand binding causes a conformation change that triggers signaling via guanine nucleotide-binding proteins (G proteins) and down-stream effectors, such as adenylate cyclase. Promotes the activation of adenylate cyclase, leading to increased intracellular cAMP levels. This chain is Corticotropin-releasing factor receptor 1 (CRHR1), found in Gallus gallus (Chicken).